The primary structure comprises 376 residues: Glucose-1-phosphate adenylyltransferase (376 aa).

Alpha-D-glucose 1-phosphate contacts are provided by residues Tyr101, Gly166, 181 to 182, and Ser192; that span reads EK.

Belongs to the bacterial/plant glucose-1-phosphate adenylyltransferase family. As to quaternary structure, homotetramer.

The enzyme catalyses alpha-D-glucose 1-phosphate + ATP + H(+) = ADP-alpha-D-glucose + diphosphate. It functions in the pathway glycan biosynthesis; glycogen biosynthesis. Involved in the biosynthesis of ADP-glucose, a building block required for the elongation reactions to produce glycogen. Catalyzes the reaction between ATP and alpha-D-glucose 1-phosphate (G1P) to produce pyrophosphate and ADP-Glc. This Bacillus cytotoxicus (strain DSM 22905 / CIP 110041 / 391-98 / NVH 391-98) protein is Glucose-1-phosphate adenylyltransferase.